A 100-amino-acid polypeptide reads, in one-letter code: Aspartyl/glutamyl-tRNA(Asn/Gln) amidotransferase subunit C (100 aa).

Belongs to the GatC family. Heterotrimer of A, B and C subunits.

It catalyses the reaction L-glutamyl-tRNA(Gln) + L-glutamine + ATP + H2O = L-glutaminyl-tRNA(Gln) + L-glutamate + ADP + phosphate + H(+). The enzyme catalyses L-aspartyl-tRNA(Asn) + L-glutamine + ATP + H2O = L-asparaginyl-tRNA(Asn) + L-glutamate + ADP + phosphate + 2 H(+). Functionally, allows the formation of correctly charged Asn-tRNA(Asn) or Gln-tRNA(Gln) through the transamidation of misacylated Asp-tRNA(Asn) or Glu-tRNA(Gln) in organisms which lack either or both of asparaginyl-tRNA or glutaminyl-tRNA synthetases. The reaction takes place in the presence of glutamine and ATP through an activated phospho-Asp-tRNA(Asn) or phospho-Glu-tRNA(Gln). This chain is Aspartyl/glutamyl-tRNA(Asn/Gln) amidotransferase subunit C, found in Streptococcus pneumoniae (strain Hungary19A-6).